A 1487-amino-acid chain; its full sequence is Probable lysine-specific demethylase SE14 (1487 aa).

The disordered stretch occupies residues 1 to 23; it reads MPPQPPPAASASASAPDPAVPAW. The span at 9–22 shows a compositional bias: low complexity; sequence ASASASAPDPAVPA. The region spanning 30-71 is the JmjN domain; that stretch reads APEYRPTESEFADPIAFLSRVEREAAAYGICKVIPPHPRPSR. A compositionally biased stretch (low complexity) spans 86 to 104; it reads CDAPAPSPAAASDSSIPPS. The tract at residues 86 to 113 is disordered; sequence CDAPAPSPAAASDSSIPPSSSSPPPVSA. The JmjC domain occupies 232–398; the sequence is NSPWNLQAIA…FAKEAAVRRA (167 aa). Residues histidine 275, glutamate 277, and histidine 366 each contribute to the Fe cation site. Disordered stretches follow at residues 494–555 and 684–718; these read SCSK…DDGD and YGDTETPEKKIPSDCPGSELSKQSGRGDVNVPDVE. Basic and acidic residues-rich tracts occupy residues 498–507 and 542–551; these read APEKKGEDGP and QAPEGEKLDT. A C2H2-type 1; degenerate zinc finger spans residues 1377-1400; it reads FQCDIEFCDMTFETKAELRAHQRN. 3 consecutive C2H2-type zinc fingers follow at residues 1400-1424, 1430-1454, and 1460-1486; these read NICTDESCGKRFSSHKYLKRHQCVH, FKCPWDGCPMTFKWLWAQTEHIRVH, and YKCSAPDCGQSFRYVSDYSRHRKKFNH.

Fe(2+) is required as a cofactor.

The protein resides in the nucleus. In terms of biological role, histone demethylase that demethylates 'Lys-4' (H3K4me) of histone H3. Involved in the control of flowering time. Has a suppressive effect on floral transition under long day conditions through the demethylation of H3K4me3 in the promoter region of the flower-promoting signal HD3B/RFT1. In Oryza sativa subsp. japonica (Rice), this protein is Probable lysine-specific demethylase SE14 (SE14).